A 697-amino-acid polypeptide reads, in one-letter code: Elongation factor G (697 aa).

In terms of domain architecture, tr-type G spans 8 to 283 (ERCRNIGIMA…AVVDYLPSPL (276 aa)). GTP-binding positions include 17-24 (AHIDAGKT), 81-85 (DTPGH), and 135-138 (NKID).

The protein belongs to the TRAFAC class translation factor GTPase superfamily. Classic translation factor GTPase family. EF-G/EF-2 subfamily.

The protein resides in the cytoplasm. Its function is as follows. Catalyzes the GTP-dependent ribosomal translocation step during translation elongation. During this step, the ribosome changes from the pre-translocational (PRE) to the post-translocational (POST) state as the newly formed A-site-bound peptidyl-tRNA and P-site-bound deacylated tRNA move to the P and E sites, respectively. Catalyzes the coordinated movement of the two tRNA molecules, the mRNA and conformational changes in the ribosome. The chain is Elongation factor G from Koribacter versatilis (strain Ellin345).